The following is a 336-amino-acid chain: Glycerol-3-phosphate dehydrogenase [NAD(P)+] (336 aa).

Ser14, Trp15, Arg35, Arg36, and Lys109 together coordinate NADPH. Positions 109 and 139 each coordinate sn-glycerol 3-phosphate. NADPH is bound at residue Ala143. Sn-glycerol 3-phosphate-binding residues include Lys194, Asp247, Ser257, Arg258, and Asn259. The active-site Proton acceptor is Lys194. Residue Arg258 coordinates NADPH. Glu284 serves as a coordination point for NADPH.

This sequence belongs to the NAD-dependent glycerol-3-phosphate dehydrogenase family.

Its subcellular location is the cytoplasm. It carries out the reaction sn-glycerol 3-phosphate + NAD(+) = dihydroxyacetone phosphate + NADH + H(+). The enzyme catalyses sn-glycerol 3-phosphate + NADP(+) = dihydroxyacetone phosphate + NADPH + H(+). The protein operates within membrane lipid metabolism; glycerophospholipid metabolism. Catalyzes the reduction of the glycolytic intermediate dihydroxyacetone phosphate (DHAP) to sn-glycerol 3-phosphate (G3P), the key precursor for phospholipid synthesis. The sequence is that of Glycerol-3-phosphate dehydrogenase [NAD(P)+] from Streptomyces coelicolor (strain ATCC BAA-471 / A3(2) / M145).